Here is a 110-residue protein sequence, read N- to C-terminus: MFGGKGGLGGLMKQAQQMQEKMQKAQEEIAQLEVTGESGAGLVKVTINGAHNCRRVEIDPSLLEDDKDMLEDLVAAAFNDAARRIDETQKEKMASVSSGMQLPPGFKMPF.

The protein belongs to the YbaB/EbfC family. As to quaternary structure, homodimer.

It localises to the cytoplasm. The protein resides in the nucleoid. Functionally, binds to DNA and alters its conformation. May be involved in regulation of gene expression, nucleoid organization and DNA protection. This Enterobacter sp. (strain 638) protein is Nucleoid-associated protein Ent638_0951.